The sequence spans 411 residues: S-adenosylmethionine synthase (411 aa).

ATP is bound at residue H15. D17 contributes to the Mg(2+) binding site. E43 contacts K(+). E56 and Q99 together coordinate L-methionine. The tract at residues 99–109 (QSPDIAQGVDT) is flexible loop. ATP contacts are provided by residues 174–176 (DGK), 247–248 (RF), D256, 262–263 (RK), A279, and K283. D256 contributes to the L-methionine binding site. An L-methionine-binding site is contributed by K287.

It belongs to the AdoMet synthase family. As to quaternary structure, homotetramer; dimer of dimers. It depends on Mg(2+) as a cofactor. K(+) serves as cofactor.

The protein localises to the cytoplasm. The catalysed reaction is L-methionine + ATP + H2O = S-adenosyl-L-methionine + phosphate + diphosphate. It participates in amino-acid biosynthesis; S-adenosyl-L-methionine biosynthesis; S-adenosyl-L-methionine from L-methionine: step 1/1. In terms of biological role, catalyzes the formation of S-adenosylmethionine (AdoMet) from methionine and ATP. The overall synthetic reaction is composed of two sequential steps, AdoMet formation and the subsequent tripolyphosphate hydrolysis which occurs prior to release of AdoMet from the enzyme. The protein is S-adenosylmethionine synthase of Streptomyces spectabilis.